A 178-amino-acid chain; its full sequence is ATP synthase subunit delta (178 aa).

It belongs to the ATPase delta chain family. In terms of assembly, F-type ATPases have 2 components, F(1) - the catalytic core - and F(0) - the membrane proton channel. F(1) has five subunits: alpha(3), beta(3), gamma(1), delta(1), epsilon(1). F(0) has three main subunits: a(1), b(2) and c(10-14). The alpha and beta chains form an alternating ring which encloses part of the gamma chain. F(1) is attached to F(0) by a central stalk formed by the gamma and epsilon chains, while a peripheral stalk is formed by the delta and b chains.

Its subcellular location is the cell membrane. F(1)F(0) ATP synthase produces ATP from ADP in the presence of a proton or sodium gradient. F-type ATPases consist of two structural domains, F(1) containing the extramembraneous catalytic core and F(0) containing the membrane proton channel, linked together by a central stalk and a peripheral stalk. During catalysis, ATP synthesis in the catalytic domain of F(1) is coupled via a rotary mechanism of the central stalk subunits to proton translocation. In terms of biological role, this protein is part of the stalk that links CF(0) to CF(1). It either transmits conformational changes from CF(0) to CF(1) or is implicated in proton conduction. This is ATP synthase subunit delta from Streptococcus pyogenes serotype M3 (strain SSI-1).